Reading from the N-terminus, the 171-residue chain is Early E1A protein (171 aa).

The tract at residues P40–V48 is interaction with RB1 in competition with E2F1. The tract at residues D67 to T96 is disordered. A compositionally biased stretch (pro residues) spans S84–T96. The short motif at L106–E110 is the LXCXE motif, interaction with host RB1 element. A zinc finger lies at C145–C163. Positions K166–R171 match the Nuclear localization signal motif.

The protein belongs to the adenoviridae E1A protein family. As to quaternary structure, interacts with host UBE2I; this interaction interferes with polySUMOylation. Interacts with host RB1; this interaction induces the aberrant dissociation of RB1-E2F1 complex thereby disrupting the activity of RB1 and activating E2F1-regulated genes. Interacts with host ATF7; the interaction enhances ATF7-mediated viral transactivation activity which requires the zinc binding domains of both proteins. Isoform early E1A 32 kDa protein and isoform early E1A 26 kDa protein interact (via N-terminus) with CUL1 and E3 ubiquitin ligase RBX1; these interactions inhibit RBX1-CUL1-dependent elongation reaction of ubiquitin chains and attenuate ubiquitination of SCF(FBXW7) target proteins. Interacts (via PXLXP motif) with host ZMYND11/BS69 (via MYND-type zinc finger); this interaction inhibits E1A mediated transactivation. Interacts with host EP300; this interaction stimulates the acetylation of RB1 by recruiting EP300 and RB1 into a multimeric-protein complex. Interacts with host CTBP1 and CTBP2; this interaction seems to potentiate viral replication. Interacts with host DCAF7. Interacts with host DYRK1A. Interacts with host KPNA4; this interaction allows E1A import into the host nucleus. Interacts with host EP400; this interaction stabilizes MYC. Interacts with host TBP protein; this interaction probably disrupts the TBP-TATA complex.

It is found in the host nucleus. In terms of biological role, plays a role in viral genome replication by driving entry of quiescent cells into the cell cycle. Stimulation of progression from G1 to S phase allows the virus to efficiently use the cellular DNA replicating machinery to achieve viral genome replication. E1A protein has both transforming and trans-activating activities. Induces the disassembly of the E2F1 transcription factor from RB1 by direct competition for the same binding site on RB1, with subsequent transcriptional activation of E2F1-regulated S-phase genes and of the E2 region of the adenoviral genome. Release of E2F1 leads to the ARF-mediated inhibition of MDM2 and causes TP53/p53 to accumulate because it is not targeted for degradation by MDM2-mediated ubiquitination anymore. This increase in TP53, in turn, would arrest the cell proliferation and direct its death but this effect is counteracted by the viral protein E1B-55K. Inactivation of the ability of RB1 to arrest the cell cycle is critical for cellular transformation, uncontrolled cellular growth and proliferation induced by viral infection. Interaction with RBX1 and CUL1 inhibits ubiquitination of the proteins targeted by SCF(FBXW7) ubiquitin ligase complex, and may be linked to unregulated host cell proliferation. The tumorigenesis-restraining activity of E1A may be related to the disruption of the host CtBP-CtIP complex through the CtBP binding motif. This Canis lupus familiaris (Dog) protein is Early E1A protein.